The chain runs to 392 residues: Chorismate synthase (392 aa).

Positions 39 and 45 each coordinate NADP(+). Residues 128-130 (RSS), 248-249 (QA), glycine 300, 315-319 (KPIPT), and arginine 341 each bind FMN.

The protein belongs to the chorismate synthase family. In terms of assembly, homotetramer. It depends on FMNH2 as a cofactor.

The catalysed reaction is 5-O-(1-carboxyvinyl)-3-phosphoshikimate = chorismate + phosphate. It participates in metabolic intermediate biosynthesis; chorismate biosynthesis; chorismate from D-erythrose 4-phosphate and phosphoenolpyruvate: step 7/7. In terms of biological role, catalyzes the anti-1,4-elimination of the C-3 phosphate and the C-6 proR hydrogen from 5-enolpyruvylshikimate-3-phosphate (EPSP) to yield chorismate, which is the branch point compound that serves as the starting substrate for the three terminal pathways of aromatic amino acid biosynthesis. This reaction introduces a second double bond into the aromatic ring system. This chain is Chorismate synthase, found in Trichlorobacter lovleyi (strain ATCC BAA-1151 / DSM 17278 / SZ) (Geobacter lovleyi).